The following is a 211-amino-acid chain: Uracil phosphoribosyltransferase (211 aa).

5-phospho-alpha-D-ribose 1-diphosphate contacts are provided by residues Arg78, Arg103, and 130 to 138; that span reads DPMLATGGT. Uracil-binding positions include Ile195 and 200–202; that span reads GDA. Residue Asp201 participates in 5-phospho-alpha-D-ribose 1-diphosphate binding.

It belongs to the UPRTase family. Requires Mg(2+) as cofactor.

The enzyme catalyses UMP + diphosphate = 5-phospho-alpha-D-ribose 1-diphosphate + uracil. Its pathway is pyrimidine metabolism; UMP biosynthesis via salvage pathway; UMP from uracil: step 1/1. With respect to regulation, allosterically activated by GTP. Catalyzes the conversion of uracil and 5-phospho-alpha-D-ribose 1-diphosphate (PRPP) to UMP and diphosphate. This chain is Uracil phosphoribosyltransferase, found in Streptomyces griseus subsp. griseus (strain JCM 4626 / CBS 651.72 / NBRC 13350 / KCC S-0626 / ISP 5235).